The following is a 68-amino-acid chain: MAFLKKSLFLVLFLGLVSLSVCEEEKRESEEEKNEQEEDDRDERSEEKRLLGMIPLAISAISALSKLG.

A signal peptide spans 1–22; it reads MAFLKKSLFLVLFLGLVSLSVC. Residues 23-49 constitute a propeptide that is removed on maturation; the sequence is EEEKRESEEEKNEQEEDDRDERSEEKR. The disordered stretch occupies residues 24–46; it reads EEKRESEEEKNEQEEDDRDERSE. Acidic residues predominate over residues 31 to 41; sequence EEKNEQEEDDR. Leucine 67 is modified (leucine amide).

It belongs to the frog skin active peptide (FSAP) family. Medusin subfamily. As to expression, expressed by the skin glands.

It is found in the secreted. Functionally, antimicrobial peptide active against Gram-positive bacteria and fungi but inactive against Gram-negative bacteria. Also inhibits growth of B.dendrobatidis zoospores at high concentrations. Shows anticancer activities. Shows hemolytic activity. The polypeptide is Medusin-AS (Agalychnis spurrelli (Gliding leaf frog)).